The sequence spans 236 residues: Leucyl/phenylalanyl-tRNA--protein transferase (236 aa).

Belongs to the L/F-transferase family.

The protein resides in the cytoplasm. It catalyses the reaction N-terminal L-lysyl-[protein] + L-leucyl-tRNA(Leu) = N-terminal L-leucyl-L-lysyl-[protein] + tRNA(Leu) + H(+). It carries out the reaction N-terminal L-arginyl-[protein] + L-leucyl-tRNA(Leu) = N-terminal L-leucyl-L-arginyl-[protein] + tRNA(Leu) + H(+). The catalysed reaction is L-phenylalanyl-tRNA(Phe) + an N-terminal L-alpha-aminoacyl-[protein] = an N-terminal L-phenylalanyl-L-alpha-aminoacyl-[protein] + tRNA(Phe). Functionally, functions in the N-end rule pathway of protein degradation where it conjugates Leu, Phe and, less efficiently, Met from aminoacyl-tRNAs to the N-termini of proteins containing an N-terminal arginine or lysine. The protein is Leucyl/phenylalanyl-tRNA--protein transferase of Nitrosomonas europaea (strain ATCC 19718 / CIP 103999 / KCTC 2705 / NBRC 14298).